A 365-amino-acid chain; its full sequence is Histidinol-phosphate aminotransferase 2 (365 aa).

Lys-222 carries the N6-(pyridoxal phosphate)lysine modification.

This sequence belongs to the class-II pyridoxal-phosphate-dependent aminotransferase family. Histidinol-phosphate aminotransferase subfamily. In terms of assembly, homodimer. Pyridoxal 5'-phosphate is required as a cofactor.

The enzyme catalyses L-histidinol phosphate + 2-oxoglutarate = 3-(imidazol-4-yl)-2-oxopropyl phosphate + L-glutamate. The protein operates within amino-acid biosynthesis; L-histidine biosynthesis; L-histidine from 5-phospho-alpha-D-ribose 1-diphosphate: step 7/9. The protein is Histidinol-phosphate aminotransferase 2 (hisC2) of Bordetella bronchiseptica (strain ATCC BAA-588 / NCTC 13252 / RB50) (Alcaligenes bronchisepticus).